The following is a 198-amino-acid chain: Peroxiredoxin-2 (198 aa).

An N-acetylalanine modification is found at Ala-2. In terms of domain architecture, Thioredoxin spans 6–164; sequence AHIGKPAPDF…ALRLVQAFQY (159 aa). Catalysis depends on Cys-51, which acts as the Cysteine sulfenic acid (-SOH) intermediate. Ser-112 carries the phosphoserine modification. A Phosphothreonine modification is found at Thr-182. Lys-196 carries the N6-acetyllysine modification.

This sequence belongs to the peroxiredoxin family. AhpC/Prx1 subfamily. Homodimer; disulfide-linked, upon oxidation. 5 homodimers assemble to form a ring-like decamer. Interacts with TIPIN. In terms of processing, the enzyme can be inactivated by further oxidation of the cysteine sulfenic acid (C(P)-SOH) to sulphinic acid (C(P)-SO2H) instead of its condensation to a disulfide bond. It can be reactivated by forming a transient disulfide bond with sulfiredoxin SRXN1, which reduces the cysteine sulfinic acid in an ATP- and Mg-dependent manner. Acetylation increases resistance to transition to high molecular-mass complexes. Deacetylated by HDAC6 which decreases reducing activity.

It localises to the cytoplasm. It catalyses the reaction a hydroperoxide + [thioredoxin]-dithiol = an alcohol + [thioredoxin]-disulfide + H2O. Its function is as follows. Thiol-specific peroxidase that catalyzes the reduction of hydrogen peroxide and organic hydroperoxides to water and alcohols, respectively. Plays a role in cell protection against oxidative stress by detoxifying peroxides and as sensor of hydrogen peroxide-mediated signaling events. Might participate in the signaling cascades of growth factors and tumor necrosis factor-alpha by regulating the intracellular concentrations of H(2)O(2). This chain is Peroxiredoxin-2 (PRDX2), found in Cricetulus griseus (Chinese hamster).